The following is a 279-amino-acid chain: MASIHPTAIIEPGAKIGKDVVIEPYVVIKATVTLCDNVVVKSYAYIDGNTTIGKGTTIWPSAMIGNKPQDLKYQGEKTYVTIGENCEIREFAIITSSTFEGTTVSIGNNCLIMPWAHVAHNCTIGNNVVLSNHAQLAGHVQVGDYAILGGMVGVHQFVRIGAHAMVGALSGIRRDVPPYTIGSGNPYQLAGINKVGLQRRQVPFATRLALIKAFKKIYRADGCFFESLEETLEEYGDIPEVKNFIEFCQSPSKRGIERSIDKQALEEESADKEGVLIES.

This sequence belongs to the transferase hexapeptide repeat family. LpxA subfamily. In terms of assembly, homotrimer.

Its subcellular location is the cytoplasm. The enzyme catalyses a (3R)-hydroxyacyl-[ACP] + UDP-N-acetyl-alpha-D-glucosamine = a UDP-3-O-[(3R)-3-hydroxyacyl]-N-acetyl-alpha-D-glucosamine + holo-[ACP]. It participates in glycolipid biosynthesis; lipid IV(A) biosynthesis; lipid IV(A) from (3R)-3-hydroxytetradecanoyl-[acyl-carrier-protein] and UDP-N-acetyl-alpha-D-glucosamine: step 1/6. Functionally, involved in the biosynthesis of lipid A, a phosphorylated glycolipid that anchors the lipopolysaccharide to the outer membrane of the cell. This is Acyl-[acyl-carrier-protein]--UDP-N-acetylglucosamine O-acyltransferase from Chlamydia pneumoniae (Chlamydophila pneumoniae).